Reading from the N-terminus, the 284-residue chain is L-ribulose-5-phosphate 3-epimerase UlaE (284 aa).

The protein belongs to the L-ribulose-5-phosphate 3-epimerase family.

It catalyses the reaction L-ribulose 5-phosphate = L-xylulose 5-phosphate. It participates in cofactor degradation; L-ascorbate degradation; D-xylulose 5-phosphate from L-ascorbate: step 3/4. Functionally, catalyzes the isomerization of L-xylulose-5-phosphate to L-ribulose-5-phosphate. Is involved in the anaerobic L-ascorbate utilization. The chain is L-ribulose-5-phosphate 3-epimerase UlaE from Escherichia coli (strain 55989 / EAEC).